The primary structure comprises 186 residues: GTP cyclohydrolase 1 (186 aa).

Zn(2+) contacts are provided by Cys-78, His-81, and Cys-150.

The protein belongs to the GTP cyclohydrolase I family. In terms of assembly, toroid-shaped homodecamer, composed of two pentamers of five dimers.

It carries out the reaction GTP + H2O = 7,8-dihydroneopterin 3'-triphosphate + formate + H(+). It functions in the pathway cofactor biosynthesis; 7,8-dihydroneopterin triphosphate biosynthesis; 7,8-dihydroneopterin triphosphate from GTP: step 1/1. The polypeptide is GTP cyclohydrolase 1 (Enterococcus faecalis (strain ATCC 700802 / V583)).